A 193-amino-acid chain; its full sequence is Protein GrpE (193 aa).

The segment covering 1-22 has biased composition (basic and acidic residues); that stretch reads MDPKEKEKMAEELNVEETKDTA. The segment at 1-45 is disordered; that stretch reads MDPKEKEKMAEELNVEETKDTAEEQPQDDQAEEAAPLTHEEQLEK. The span at 23–32 shows a compositional bias: acidic residues; the sequence is EEQPQDDQAE.

The protein belongs to the GrpE family. Homodimer.

It is found in the cytoplasm. Its function is as follows. Participates actively in the response to hyperosmotic and heat shock by preventing the aggregation of stress-denatured proteins, in association with DnaK and GrpE. It is the nucleotide exchange factor for DnaK and may function as a thermosensor. Unfolded proteins bind initially to DnaJ; upon interaction with the DnaJ-bound protein, DnaK hydrolyzes its bound ATP, resulting in the formation of a stable complex. GrpE releases ADP from DnaK; ATP binding to DnaK triggers the release of the substrate protein, thus completing the reaction cycle. Several rounds of ATP-dependent interactions between DnaJ, DnaK and GrpE are required for fully efficient folding. The protein is Protein GrpE of Bacteroides thetaiotaomicron (strain ATCC 29148 / DSM 2079 / JCM 5827 / CCUG 10774 / NCTC 10582 / VPI-5482 / E50).